Consider the following 218-residue polypeptide: Small ribosomal subunit protein uS3c (218 aa).

In terms of domain architecture, KH type-2 spans 43–118 (IKNYVQKNMK…KLNISITRIE (76 aa)).

Belongs to the universal ribosomal protein uS3 family. As to quaternary structure, part of the 30S ribosomal subunit.

The protein resides in the plastid. It localises to the chloroplast. The protein is Small ribosomal subunit protein uS3c (rps3) of Populus trichocarpa (Western balsam poplar).